Consider the following 144-residue polypeptide: Urease subunit beta (144 aa).

Belongs to the urease beta subunit family. Heterotrimer of UreA (gamma), UreB (beta) and UreC (alpha) subunits. Three heterotrimers associate to form the active enzyme.

It is found in the cytoplasm. The catalysed reaction is urea + 2 H2O + H(+) = hydrogencarbonate + 2 NH4(+). It participates in nitrogen metabolism; urea degradation; CO(2) and NH(3) from urea (urease route): step 1/1. This chain is Urease subunit beta, found in Yersinia pseudotuberculosis serotype O:1b (strain IP 31758).